We begin with the raw amino-acid sequence, 277 residues long: Caspase-3 (277 aa).

Met1 is modified (N-acetylmethionine). 2 consecutive propeptides follow at residues 1-9 (MDNNETSVD) and 10-28 (SKSINNFETKTIHGSKSMD). Lys11 is subject to N6-acetyllysine. Ser26 is subject to Phosphoserine. Active-site residues include His121 and Cys163. Cys163 is subject to S-nitrosocysteine; in inhibited form.

This sequence belongs to the peptidase C14A family. In terms of assembly, heterotetramer that consists of two anti-parallel arranged heterodimers, each one formed by a 17 kDa (p17) and a 12 kDa (p12) subunit. Interacts with BIRC6/bruce. Post-translationally, cleavage by granzyme B, caspase-6, caspase-8 and caspase-10 generates the two active subunits. Additional processing of the propeptides is likely due to the autocatalytic activity of the activated protease. Active heterodimers between the small subunit of caspase-7 protease and the large subunit of caspase-3 also occur and vice versa. S-nitrosylated on its catalytic site cysteine in unstimulated cell lines and denitrosylated upon activation of the Fas apoptotic pathway, associated with an increase in intracellular caspase activity. Fas therefore activates caspase-3 not only by inducing the cleavage of the caspase zymogen to its active subunits, but also by stimulating the denitrosylation of its active site thiol. In terms of processing, ubiquitinated by BIRC6; this activity is inhibited by DIABLO/SMAC. Expressed in heart, brain, liver, and muscle but not in kidney or testis.

It localises to the cytoplasm. The enzyme catalyses Strict requirement for an Asp residue at positions P1 and P4. It has a preferred cleavage sequence of Asp-Xaa-Xaa-Asp-|- with a hydrophobic amino-acid residue at P2 and a hydrophilic amino-acid residue at P3, although Val or Ala are also accepted at this position.. With respect to regulation, inhibited by BIRC6; following inhibition of BIRC6-caspase binding by DIABLO/SMAC, BIRC6 is subjected to caspase cleavage, leading to an increase in active caspases. Its function is as follows. Involved in the activation cascade of caspases responsible for apoptosis execution. At the onset of apoptosis, it proteolytically cleaves poly(ADP-ribose) polymerase PARP1 at a '216-Asp-|-Gly-217' bond. Cleaves and activates sterol regulatory element binding proteins (SREBPs) between the basic helix-loop-helix leucine zipper domain and the membrane attachment domain. Cleaves and activates caspase-6, -7 and -9 (CASP6, CASP7 and CASP9, respectively). Cleaves and inactivates interleukin-18 (IL18). Triggers cell adhesion in sympathetic neurons through RET cleavage. Cleaves IL-1 beta between an Asp and an Ala, releasing the mature cytokine which is involved in a variety of inflammatory processes. Cleaves and inhibits serine/threonine-protein kinase AKT1 in response to oxidative stress. Acts as an inhibitor of type I interferon production during virus-induced apoptosis by mediating cleavage of antiviral proteins CGAS, IRF3 and MAVS, thereby preventing cytokine overproduction. Also involved in pyroptosis by mediating cleavage and activation of gasdermin-E (GSDME). Cleaves XRCC4 and phospholipid scramblase proteins XKR4, XKR8 and XKR9, leading to promote phosphatidylserine exposure on apoptotic cell surface. Cleaves BIRC6 following inhibition of BIRC6-caspase binding by DIABLO/SMAC. This Rattus norvegicus (Rat) protein is Caspase-3 (Casp3).